A 1408-amino-acid chain; its full sequence is DNA-directed RNA polymerase subunit beta' (1408 aa).

Zn(2+) is bound by residues cysteine 70, cysteine 72, cysteine 85, and cysteine 88. Residues aspartate 460, aspartate 462, and aspartate 464 each contribute to the Mg(2+) site. The Zn(2+) site is built by cysteine 814, cysteine 888, cysteine 895, and cysteine 898.

It belongs to the RNA polymerase beta' chain family. As to quaternary structure, the RNAP catalytic core consists of 2 alpha, 1 beta, 1 beta' and 1 omega subunit. When a sigma factor is associated with the core the holoenzyme is formed, which can initiate transcription. Mg(2+) serves as cofactor. The cofactor is Zn(2+).

It carries out the reaction RNA(n) + a ribonucleoside 5'-triphosphate = RNA(n+1) + diphosphate. DNA-dependent RNA polymerase catalyzes the transcription of DNA into RNA using the four ribonucleoside triphosphates as substrates. The protein is DNA-directed RNA polymerase subunit beta' of Shewanella frigidimarina (strain NCIMB 400).